Consider the following 109-residue polypeptide: Globin (109 aa).

Positions 3–109 (PLTAAEVSSL…IFPIAGIHAL (107 aa)) constitute a Globin domain.

Belongs to the globin family. In terms of assembly, monomer.

Its function is as follows. Oxygen binding protein. In Dicrocoelium dendriticum (Small liver fluke), this protein is Globin.